The chain runs to 301 residues: Small ribosomal subunit protein uS2 (301 aa).

Positions 282-301 are disordered; the sequence is VRKQPVSENENVEAAAAEQK. The span at 289–301 shows a compositional bias: low complexity; sequence ENENVEAAAAEQK.

It belongs to the universal ribosomal protein uS2 family.

This Koribacter versatilis (strain Ellin345) protein is Small ribosomal subunit protein uS2.